Here is a 261-residue protein sequence, read N- to C-terminus: uncharacterized protein (261 aa).

6 consecutive transmembrane segments (helical) span residues 31–51 (TFLSFIPLFLVTSAFVLTGIV), 71–91 (TNVMLLIYAVIYTFNPKSWLL), 101–121 (LAYILFTFIGYNLILSIAGIA), 130–150 (LTSSIFLHVIAPIAFFIASFI), 167–187 (LLLFMIYPLIYGLYLVTIPYV), and 213–233 (FAWLVVFAVLFIYFPLSYLAI).

Its subcellular location is the cell membrane. This is an uncharacterized protein from Mycoplasma genitalium (strain ATCC 33530 / DSM 19775 / NCTC 10195 / G37) (Mycoplasmoides genitalium).